Here is a 125-residue protein sequence, read N- to C-terminus: Holo-[acyl-carrier-protein] synthase (125 aa).

Residues Asp9 and Glu58 each contribute to the Mg(2+) site.

The protein belongs to the P-Pant transferase superfamily. AcpS family. It depends on Mg(2+) as a cofactor.

Its subcellular location is the cytoplasm. It carries out the reaction apo-[ACP] + CoA = holo-[ACP] + adenosine 3',5'-bisphosphate + H(+). Its function is as follows. Transfers the 4'-phosphopantetheine moiety from coenzyme A to a Ser of acyl-carrier-protein. This chain is Holo-[acyl-carrier-protein] synthase, found in Shewanella amazonensis (strain ATCC BAA-1098 / SB2B).